A 750-amino-acid polypeptide reads, in one-letter code: Iron-sulfur clusters transporter ATM1, mitochondrial (750 aa).

The N-terminal 16 residues, 1–16, are a transit peptide targeting the mitochondrion; the sequence is MFIRNVKLIKPSPVRF. The Mitochondrial matrix portion of the chain corresponds to 17 to 124; sequence ISPIPFSFPI…PKNNLNFKIR (108 aa). Composition is skewed to low complexity over residues 43 to 75 and 87 to 100; these read TSNFKSTSSSSSLKSTSTSTSTSTSKTTPKTLS and DNDTTSSGSSSSEN. Residues 43-100 form a disordered region; sequence TSNFKSTSSSSSLKSTSTSTSTSTSKTTPKTLSKPPPKVKPPIQDNDTTSSGSSSSEN. The chain crosses the membrane as a helical span at residues 125–146; sequence VIIALSLLVGAKILNVQVPFYF. One can recognise an ABC transmembrane type-1 domain in the interval 125–415; it reads VIIALSLLVG…LGSVYRELKQ (291 aa). Residues 147-169 are Mitochondrial intermembrane-facing; sequence KQIIDTMNIDWTNEVGVFSTVIG. A helical membrane pass occupies residues 170–193; the sequence is SLILAYGGARFGAVLFGELRNAIF. At 194-242 the chain is on the mitochondrial matrix side; sequence ASVAQSAIRRVAYNTFVKLLNMDLQFHLSRQTGGLTRAIDRGTKGISYV. A helical membrane pass occupies residues 243-266; that stretch reads LSAMVFHIIPITLEISIVCGILTY. Residue Asn-267 is a topological domain, mitochondrial intermembrane. A helical membrane pass occupies residues 268-288; the sequence is YGASFAAMTFVTMLAYSIFTI. The Mitochondrial matrix portion of the chain corresponds to 289–354; that stretch reads QTTAWRTKFR…SSVKIATSLA (66 aa). Glutathione contacts are provided by residues 294–298 and 357–360; these read RTKFR and NSGQ. Residues 355-373 form a helical membrane-spanning segment; the sequence is FLNSGQNFIFTSALTAMMY. Over 374–388 the chain is Mitochondrial intermembrane; the sequence is MGCQGVYTGELTVGD. Residues 389–410 form a helical membrane-spanning segment; sequence LVLINQLVFQLSVPLNFLGSVY. Gly-407 contacts glutathione. Topologically, residues 411–750 are mitochondrial matrix; sequence RELKQSLLDM…LFNSQTFEKK (340 aa). Residues 437-462 form a disordered region; sequence PNAPPLKLNNNNNNNNNNNNNNNNSL. Residues 445–460 show a composition bias toward low complexity; it reads NNNNNNNNNNNNNNNN. The ABC transporter domain maps to 466-702; it reads IRFENVSFGY…QPNSLYAQLW (237 aa). Residues Tyr-475 and 499–510 each bind ATP; that span reads GPSGSGKSTILR.

It belongs to the ABC transporter superfamily. ABCB family. Heavy Metal importer (TC 3.A.1.210) subfamily. In terms of assembly, homodimer.

Its subcellular location is the mitochondrion inner membrane. Its function is as follows. Performs an essential function in the generation of cytoplasmic iron-sulfur proteins by mediating the ATP-dependent export of Fe/S cluster precursors synthesized by NFS1 and other mitochondrial proteins. Hydrolyzes ATP. Binds glutathione and may function by transporting a glutathione-conjugated iron-sulfur compound. In Candida albicans (strain SC5314 / ATCC MYA-2876) (Yeast), this protein is Iron-sulfur clusters transporter ATM1, mitochondrial.